Reading from the N-terminus, the 416-residue chain is Orexin/Hypocretin receptor type 1 (416 aa).

The disordered stretch occupies residues 1-22 (MEPSATPGAQPGVPTSSGEPFH). Over 1 to 46 (MEPSATPGAQPGVPTSSGEPFHLPPDYEDEFLRYLWRDYLYPKQYE) the chain is Extracellular. Residues 26–41 (DYEDEFLRYLWRDYLY) form a required for response to orexin-A region. A helical transmembrane segment spans residues 47 to 67 (WVLIAAYVAVFLIALVGNTLV). The Cytoplasmic portion of the chain corresponds to 68–82 (CLAVWRNHHMRTVTN). The chain crosses the membrane as a helical span at residues 83–105 (YFIVNLSLADVLVTAICLPASLL). The Extracellular portion of the chain corresponds to 106 to 119 (VDITESWLFGQALC). A disulfide bond links Cys119 and Cys202. Residues 120–140 (KVIPYLQAVSVSVAVLTLSFI) form a helical membrane-spanning segment. Topologically, residues 141–160 (ALDRWYAICHPLLFKSTARR) are cytoplasmic. A helical membrane pass occupies residues 161 to 182 (ARGSILGIWAVSLAVMVPQAAV). Over 183–213 (MECSSVLPELANRTRLFSVCDEHWADELYPK) the chain is Extracellular. Asn194 is a glycosylation site (N-linked (GlcNAc...) asparagine). Residues 214-235 (IYHSCFFIVTYLAPLGLMAMAY) traverse the membrane as a helical segment. Topologically, residues 236 to 298 (FQIFRKLWGR…QMRARRKTAK (63 aa)) are cytoplasmic. The helical transmembrane segment at 299–321 (MLMVVLLVFALCYLPISVLNVLK) threads the bilayer. The Extracellular segment spans residues 322–336 (RVFGMFRQASDREAV). A helical transmembrane segment spans residues 337–360 (YACFTFSHWLVYANSAANPIIYNF). Over 361-416 (LSGKFREQFKAAFSCCLPGLGPGSSARHKSLSLQSRCSVSKVSEHVVLTTVTTVLS) the chain is Cytoplasmic.

It belongs to the G-protein coupled receptor 1 family. In terms of tissue distribution, widely expressed.

The protein resides in the cell membrane. Functionally, moderately selective excitatory receptor for orexin-A and, with a lower affinity, for orexin-B neuropeptide. Triggers an increase in cytoplasmic Ca(2+) levels in response to orexin-A binding. The protein is Orexin/Hypocretin receptor type 1 of Mus musculus (Mouse).